A 674-amino-acid polypeptide reads, in one-letter code: Probable copper-transporting P-type ATPase B (674 aa).

Positions 1 to 22 (MNHSNQMHHDNHASHDHHSGHA) are disordered. Residues 7 to 19 (MHHDNHASHDHHS) show a composition bias toward basic and acidic residues. Helical transmembrane passes span 32 to 52 (FFVS…MGVN), 57 to 77 (FTFP…FFYG), 95 to 115 (GMMT…LYAF), 127 to 147 (TMDF…GHWI), 284 to 304 (GYLF…WMLI), and 315 to 335 (LVTV…PLVT). The active-site 4-aspartylphosphate intermediate is the D367. 2 residues coordinate Mg(2+): D565 and D569. Transmembrane regions (helical) follow at residues 623-645 (LWWG…AFIG) and 649-671 (SPAI…AFTL).

Belongs to the cation transport ATPase (P-type) (TC 3.A.3) family. Type IB subfamily.

It localises to the cell membrane. It catalyses the reaction Cu(+)(in) + ATP + H2O = Cu(+)(out) + ADP + phosphate + H(+). Its function is as follows. Involved in copper transport. This is Probable copper-transporting P-type ATPase B (copB) from Staphylococcus aureus (strain USA300 / TCH1516).